The primary structure comprises 443 residues: ATP-dependent protease ATPase subunit HslU (443 aa).

ATP-binding positions include isoleucine 19 and 61–66; that span reads GVGKTE. Residues 139-158 form a disordered region; it reads PPRDIGFSQPEEKDSNTRQV. Aspartate 256, glutamate 321, and arginine 393 together coordinate ATP.

The protein belongs to the ClpX chaperone family. HslU subfamily. In terms of assembly, a double ring-shaped homohexamer of HslV is capped on each side by a ring-shaped HslU homohexamer. The assembly of the HslU/HslV complex is dependent on binding of ATP.

The protein localises to the cytoplasm. In terms of biological role, ATPase subunit of a proteasome-like degradation complex; this subunit has chaperone activity. The binding of ATP and its subsequent hydrolysis by HslU are essential for unfolding of protein substrates subsequently hydrolyzed by HslV. HslU recognizes the N-terminal part of its protein substrates and unfolds these before they are guided to HslV for hydrolysis. The sequence is that of ATP-dependent protease ATPase subunit HslU from Cupriavidus taiwanensis (strain DSM 17343 / BCRC 17206 / CCUG 44338 / CIP 107171 / LMG 19424 / R1) (Ralstonia taiwanensis (strain LMG 19424)).